We begin with the raw amino-acid sequence, 330 residues long: Mas-related G-protein coupled receptor member B8 (330 aa).

Residues 1 to 33 (MDSSFPDWNIEFREQNESYFMESSSCDMSLAMS) lie on the Extracellular side of the membrane. A glycan (N-linked (GlcNAc...) asparagine) is linked at asparagine 16. The helical transmembrane segment at 34–54 (LLSIIIAIIGLTGNVIVLQLL) threads the bilayer. Residues 55–62 (GFHMHRNA) are Cytoplasmic-facing. Residues 63 to 83 (FSVYIFNLSGANFLFLCTHIV) form a helical membrane-spanning segment. Over 84-101 (FSLENLIRQFHYIDIHMA) the chain is Extracellular. A helical membrane pass occupies residues 102–122 (LFSVNVTILAYLAGVSMITAI). The Cytoplasmic segment spans residues 123–146 (SVEYWLSVLWPTWYHAQRPKHTST). A helical membrane pass occupies residues 147–167 (VICTLLWVFSLLLTLWNWIIC). Residues 168–177 (KVLDYIYNWD) are Extracellular-facing. Residues 178–198 (MCWKLALIIVVWLLVLFVVLS) form a helical membrane-spanning segment. The Cytoplasmic segment spans residues 199 to 219 (RSNQALLFRVFCGSQQTPVTR). Residues 220 to 240 (LLVTIMLTALVVLICGFGIGI) traverse the membrane as a helical segment. Residues 241-260 (CFFYWKKEENSIMPCGYFYE) lie on the Extracellular side of the membrane. The chain crosses the membrane as a helical span at residues 261 to 281 (TILLLSGVNSCANPIICLFVG). Residues 282–330 (SIKHCQFQCGTLRLILQRAIQESPEEEDEEVEEVVEQEGGEEDEESTTL) lie on the Cytoplasmic side of the membrane. The tract at residues 302–330 (QESPEEEDEEVEEVVEQEGGEEDEESTTL) is disordered. Acidic residues predominate over residues 304 to 330 (SPEEEDEEVEEVVEQEGGEEDEESTTL).

The protein belongs to the G-protein coupled receptor 1 family. Mas subfamily.

The protein localises to the membrane. Functionally, orphan receptor. Probably involved in the function of nociceptive neurons. May regulate nociceptor function and/or development, including the sensation or modulation of pain. This Mus musculus (Mouse) protein is Mas-related G-protein coupled receptor member B8 (Mrgprb8).